We begin with the raw amino-acid sequence, 220 residues long: MDNVVLMPREKLLASGAESLTDQELLAIFLRTGIKGMPVMQLSQEVLNGFGSLRELLSADLATFCRMKGLGQTQFIQLQASKEMTKRYLAQQMQVRENINEPYLAVMCFQAELESEEREVFMVMFLDNQNRLIKKEKMFYGTINQATVYPREIIKEALKCNAAAIIVAHNHPSGNCTPSESDRALTKKLEMACDLVGIRFVDHIVVGKGDYFSFEEEKFR.

Residues 98–220 (NINEPYLAVM…YFSFEEEKFR (123 aa)) form the MPN domain. 3 residues coordinate Zn(2+): His169, His171, and Asp182. The short motif at 169–182 (HNHPSGNCTPSESD) is the JAMM motif element.

This sequence belongs to the UPF0758 family.

In Actinobacillus pleuropneumoniae serotype 5b (strain L20), this protein is UPF0758 protein APL_1970.